The following is a 793-amino-acid chain: Transcription factor castor (793 aa).

Polar residues predominate over residues 44–53; that stretch reads NEDISSSTSV. Disordered stretches follow at residues 44–101, 199–259, and 272–296; these read NEDI…NLIA, VTST…HTNA, and LEST…DSSY. 3 stretches are compositionally biased toward low complexity: residues 54-68, 81-98, and 210-221; these read QQQQ…QQPQ, SSQN…PNSN, and ATPAPSAGATAG. T211 is modified (phosphothreonine). S215 bears the Phosphoserine mark. The span at 233-242 shows a compositional bias: acidic residues; sequence ESADDDEDDD. Positions 245–254 are enriched in low complexity; the sequence is LSSLTSCSSS. Over residues 273–284 the composition is skewed to polar residues; it reads ESTTDSLDSPSM. A C2H2-type 1; atypical zinc finger spans residues 377-402; that stretch reads FHCHEEPCQGKILSKKDDIIRHLKWH. 3 consecutive C2H2-type zinc fingers follow at residues 439–463, 498–522, and 556–580; these read YHCV…ANFH, YHCC…KTYH, and IHCV…KRKH. The interval 599–682 is disordered; that stretch reads EESSLDAMPQ…RLKVEDESSN (84 aa). Over residues 608-629 the composition is skewed to low complexity; that stretch reads QQQQQQQQQQPTSLSQSQSSSS. Residues 630–644 are compositionally biased toward polar residues; sequence VCGGSNTSTPLSSLS. The a.T hook DNA-binding region spans 650-662; that stretch reads ARKRGRPPKKIQL.

Expressed in a specific subset of neuroblasts in the ventral nerve cord and the procephalic region in the embryo. Expressed in many, if not all, late delaminating NBs, and in early NBs, but only after they have undergone several rounds of ganglion mother cell-producing divisions.

It is found in the nucleus. In terms of biological role, transcription factor that specifies expression of key genes in developing central nervous system (CNS). Essential for many, if not all, late developing neuroblastoma (NB) sublineages. Binds to the 5'-[CG]C[CT][CT]AAAAA[AT]-3' DNA sequence, like hb, suggesting that cas and hb act as a late regulators in early and late CNS NB sublineage, respectively. Acts by repressing expression of nub/pdm-1 and pdm2/pdm-2 POU genes, and restrict their pattern of expression in appropriate cells. Required for a full expression of vvl/drifter and acj6/I-POU; it is however unknown whether it directly activates these genes. Controls engrailed (en) expression in the ventral nerve cord. In Drosophila melanogaster (Fruit fly), this protein is Transcription factor castor (cas).